Reading from the N-terminus, the 156-residue chain is Mitochondrial translation release factor in rescue (156 aa).

A GGQ domain region spans residues 44–108 (EEELEEQFVR…LREKLEVAYK (65 aa)). The short motif at 58 to 60 (GGQ) is the GGQ element. The stretch at 100–141 (REKLEVAYKGEESELLKMKKESMQKKQDKRRKVNENIEKKRR) forms a coiled coil. 2 stretches are compositionally biased toward basic and acidic residues: residues 114–125 (LLKMKKESMQKK) and 132–156 (VNEN…DKST). The interval 114-156 (LLKMKKESMQKKQDKRRKVNENIEKKRRFKEMLNSKQEDDKST) is disordered.

Belongs to the prokaryotic/mitochondrial release factor family. In terms of assembly, interacts (via C-terminus) with MTRES1 (via S4 domain). Associates with mitoribosomal S39 large subunit, peptidyl tRNA and nascent chain.

It is found in the mitochondrion. Functionally, part of a mitoribosome-associated quality control pathway that prevents aberrant translation by responding to interruptions during elongation. As heterodimer with MTRES1, ejects the unfinished nascent chain and peptidyl transfer RNA (tRNA), respectively, from stalled ribosomes. Recruitment of mitoribosome biogenesis factors to these quality control intermediates suggests additional roles for MTRES1 and MTRF during mitoribosome rescue. The sequence is that of Mitochondrial translation release factor in rescue (mtrfr) from Danio rerio (Zebrafish).